The chain runs to 291 residues: Ribosome biogenesis protein BRX1 (291 aa).

A Brix domain is found at Gln31–Gly232. Position 285 is a phosphoserine (Ser285).

The protein belongs to the BRX1 family. Part of a complex that includes BRX1, RPF1, RPF2 and SSF1 or SSF2.

The protein resides in the nucleus. It localises to the nucleolus. Required for biogenesis of the 60S ribosomal subunit. The chain is Ribosome biogenesis protein BRX1 (BRX1) from Saccharomyces cerevisiae (strain ATCC 204508 / S288c) (Baker's yeast).